A 199-amino-acid chain; its full sequence is Recombination protein RecR (199 aa).

The C4-type zinc-finger motif lies at 56 to 71 (CSICFNWSAEDPCEIC). One can recognise a Toprim domain in the interval 79–174 (SLWCVVADVK…TLRMTRLAFG (96 aa)).

This sequence belongs to the RecR family.

Its function is as follows. May play a role in DNA repair. It seems to be involved in an RecBC-independent recombinational process of DNA repair. It may act with RecF and RecO. This chain is Recombination protein RecR, found in Synechococcus sp. (strain JA-2-3B'a(2-13)) (Cyanobacteria bacterium Yellowstone B-Prime).